The primary structure comprises 89 residues: Small ribosomal subunit protein uS15 (89 aa).

The protein belongs to the universal ribosomal protein uS15 family. Part of the 30S ribosomal subunit. Forms a bridge to the 50S subunit in the 70S ribosome, contacting the 23S rRNA.

Its function is as follows. One of the primary rRNA binding proteins, it binds directly to 16S rRNA where it helps nucleate assembly of the platform of the 30S subunit by binding and bridging several RNA helices of the 16S rRNA. In terms of biological role, forms an intersubunit bridge (bridge B4) with the 23S rRNA of the 50S subunit in the ribosome. In Lysinibacillus sphaericus (strain C3-41), this protein is Small ribosomal subunit protein uS15.